Here is a 236-residue protein sequence, read N- to C-terminus: Eukaryotic translation initiation factor 3 subunit J (236 aa).

Disordered regions lie at residues 1–88 (MADD…LANM) and 188–236 (SEKQ…DDFM). The segment covering 28-46 (GEDDDEDVKESWEDEEEKK) has biased composition (acidic residues). Basic and acidic residues-rich tracts occupy residues 47–58 (DEEKPTKTEAPV), 68–88 (AKLEEQERLNEEEERKRLANM), and 188–197 (SEKQKMEKAN). Coiled-coil stretches lie at residues 61–112 (KPNK…LKSA) and 174–209 (ADIKKVKMSVESLHSEKQKMEKANAKKSAAKAKGKV). The span at 201–210 (SAAKAKGKVS) shows a compositional bias: basic residues.

It belongs to the eIF-3 subunit J family. Component of the eukaryotic translation initiation factor 3 (eIF-3) complex. The eIF-3 complex interacts with pix.

It is found in the cytoplasm. Functionally, component of the eukaryotic translation initiation factor 3 (eIF-3) complex, which is involved in protein synthesis of a specialized repertoire of mRNAs and, together with other initiation factors, stimulates binding of mRNA and methionyl-tRNAi to the 40S ribosome. The eIF-3 complex specifically targets and initiates translation of a subset of mRNAs involved in cell proliferation. The polypeptide is Eukaryotic translation initiation factor 3 subunit J (Drosophila virilis (Fruit fly)).